The primary structure comprises 706 residues: Glutamine-dependent NAD(+) synthetase (706 aa).

Residues 5 to 275 (VTVATCALNQ…VEVLTATLDL (271 aa)) form the CN hydrolase domain. Glu45 acts as the Proton acceptor; for glutaminase activity in catalysis. The active-site For glutaminase activity is Lys114. The active-site Nucleophile; for glutaminase activity is Cys175. The ligase stretch occupies residues 325-706 (YHSPEEEISL…AEPQSLDGVD (382 aa)). 355–362 (PLSGGVDS) provides a ligand contact to ATP. The active site involves Ser357.

The protein in the C-terminal section; belongs to the NAD synthetase family. As to quaternary structure, homohexamer.

The catalysed reaction is deamido-NAD(+) + L-glutamine + ATP + H2O = L-glutamate + AMP + diphosphate + NAD(+) + H(+). Its pathway is cofactor biosynthesis; NAD(+) biosynthesis; NAD(+) from deamido-NAD(+) (L-Gln route): step 1/1. In terms of biological role, catalyzes the final step of the nicotinamide adenine dinucleotide (NAD) de novo synthesis pathway, the ATP-dependent amidation of deamido-NAD using L-glutamine as a nitrogen source. The chain is Glutamine-dependent NAD(+) synthetase (NADSYN1) from Homo sapiens (Human).